The sequence spans 501 residues: DELTA-alicitoxin-Pse2a (501 aa).

Residues 1–22 form the signal peptide; it reads MSPYFKLSSALIFLAITMEALC. A propeptide spanning residues 23–35 is cleaved from the precursor; sequence SPIENTSTSNKDN. Residues 23–359 enclose the MACPF domain; that stretch reads SPIENTSTSN…GFLHFGCSYL (337 aa). Residues 135–159 adopt a coiled-coil conformation; it reads AAVTNNIASSEEEVQGLSLNLKAYS. The EGF-like domain maps to 388 to 422; it reads VCKVGPEGCQHHEDCHYRAAFWCECGGPYDLARTC. 3 cysteine pairs are disulfide-bonded: Cys-389–Cys-402, Cys-396–Cys-410, and Cys-412–Cys-422.

It is found in the secreted. It localises to the nematocyst. In terms of biological role, causes lethal toxicity to the shrimp Palaemon paucidence, and hemolytic activity toward sheep red blood cells. The chain is DELTA-alicitoxin-Pse2a from Phyllodiscus semoni (Night anemone).